The following is a 487-amino-acid chain: UDP-glucose flavonoid 3-O-glucosyltransferase 7 (487 aa).

The active-site Proton acceptor is the His23. His23 is an an anthocyanidin binding site. Catalysis depends on Asp121, which acts as the Charge relay. 7 residues coordinate UDP-alpha-D-glucose: Ala345, Gln347, His362, Trp365, Asn366, Ser367, and Glu370. Position 385 (Gly385) interacts with an anthocyanidin. Residues Glu386 and Gln387 each contribute to the UDP-alpha-D-glucose site.

It belongs to the UDP-glycosyltransferase family. In terms of tissue distribution, strongly expressed in achenes and receptacles.

It catalyses the reaction a flavonol + UDP-alpha-D-glucose = a flavonol 3-O-beta-D-glucoside + UDP + H(+). Broad spectrum multifunctional glucosyltransferase. Catalyzes the formation of flavonol 3-O- and 4'-O-glucosides during fruit ripening. Accepted substrates include several flavonoids, hydroxycoumarins and beta-naphthols. Uses UDP-Glc as a sugar donor, but not UDP-Gal or UDP-GlcUA. May also be involved in detoxification of xenobiotics. The protein is UDP-glucose flavonoid 3-O-glucosyltransferase 7 of Fragaria ananassa (Strawberry).